Consider the following 2792-residue polypeptide: E3 ubiquitin-protein ligase UBR5 (2792 aa).

Thr-2 bears the N-acetylthreonine mark. The span at 77–88 (DRLELGKPDNND) shows a compositional bias: basic and acidic residues. The disordered stretch occupies residues 77–175 (DRLELGKPDN…DRGSGLLGSQ (99 aa)). The span at 94 to 111 (SSSGTGRTSRPGRTSDSP) shows a compositional bias: low complexity. A Phosphoserine modification is found at Ser-110. Residues 135 to 144 (GVGGSGGGSS) are compositionally biased toward gly residues. The UBA domain maps to 184 to 226 (VIPEELISQAQVVLQGKSRSVIIRELQRTNLDVNLAVNNLLSR). Ser-321 is subject to Phosphoserine. A compositionally biased stretch (basic and acidic residues) spans 322–341 (FDNERGSTSKEGESNPDKKN). The interval 322 to 347 (FDNERGSTSKEGESNPDKKNTPVQSP) is disordered. 2 positions are modified to phosphoserine: Ser-346 and Ser-572. A compositionally biased stretch (basic and acidic residues) spans 577 to 598 (KSMEKASKTLETKPESKQEPVK). Residues 577–642 (KSMEKASKTL…APREEEKVNE (66 aa)) form a disordered region. A Phosphoserine modification is found at Ser-606. The segment covering 608–622 (ASTCSDASSIASSAS) has biased composition (low complexity). At Thr-631 the chain carries Phosphothreonine. Residues Ser-802, Ser-922, and Ser-1012 each carry the phosphoserine modification. Disordered stretches follow at residues 993 to 1029 (AGLG…SMDP) and 1046 to 1069 (TAAT…EPSV). A compositionally biased stretch (pro residues) spans 1011–1027 (VSPPIAPPSWVPDPPSM). Over residues 1046-1067 (TAATGSGQGPSTSTIPGPSTEP) the composition is skewed to polar residues. Thr-1109 and Thr-1129 each carry phosphothreonine. Residues 1171–1239 (DTCSFTWTGA…EKCKCKTLIA (69 aa)) form a UBR-type zinc finger. Ser-1221, Ser-1302, Ser-1349, Ser-1369, and Ser-1475 each carry phosphoserine. The tract at residues 1293 to 1312 (REDRNRKTASPEDSDMPDHD) is disordered. The segment at 1509-1734 (SVEPLPPRPS…PSSTSTPAAS (226 aa)) is disordered. Residues 1518 to 1531 (SSDQASSSSQSQSS) are compositionally biased toward low complexity. Over residues 1532–1547 (YIIRNPQQRRISQSQP) the composition is skewed to polar residues. Ser-1543 is modified (phosphoserine). Acidic residues-rich tracts occupy residues 1553–1568 (EEQD…EVEV) and 1599–1608 (HDEDGSDMEL). Positions 1623 to 1632 (NHSNQDNASG) are enriched in polar residues. 3 stretches are compositionally biased toward low complexity: residues 1635–1651 (SVVT…ASSV), 1662–1675 (SNDS…SSQS), and 1720–1734 (AAST…PAAS). Thr-1730 is subject to Phosphothreonine. Phosphoserine is present on Ser-1735. Position 1740 is a phosphotyrosine (Tyr-1740). Ser-1774 carries the phosphoserine modification. The segment at 1853-1884 (LASAGDPGHPNHPLHASQNSARRERMTAREEA) is disordered. Residues 1873–1884 (ARRERMTAREEA) show a composition bias toward basic and acidic residues. A Phosphothreonine modification is found at Thr-1963. The disordered stretch occupies residues 1978-2015 (GIDNEDSEHENDDDTSQSATLNDKDDDSLPAETGQNHP). Residues 1979–1992 (IDNEDSEHENDDDT) are compositionally biased toward acidic residues. 3 positions are modified to phosphoserine: Ser-1984, Ser-2020, and Ser-2022. Position 2024 is a phosphothreonine (Thr-2024). At Ser-2070 the chain carries Phosphoserine. The disordered stretch occupies residues 2111-2137 (RQKKEGEEQSLLAEEADSSKPGPSAPD). Position 2207 is a phosphothreonine (Thr-2207). Phosphoserine occurs at positions 2235 and 2283. Residues 2317–2387 (HTSLMQRLRN…SDDPDPLPAH (71 aa)) are disordered. Basic and acidic residues-rich tracts occupy residues 2326–2342 (NRGE…EMRR) and 2350–2362 (SRRD…RRQL). In terms of domain architecture, PABC spans 2371–2448 (PASEGNPSDD…AMELIIAHGR (78 aa)). Positions 2455–2792 (ILDLGLLDSS…AIKTKNFGFV (338 aa)) constitute an HECT domain. A phosphoserine mark is found at Ser-2463, Ser-2477, and Ser-2479. A disordered region spans residues 2467 to 2494 (VQENRKRHGSSRSVVDMDLEDTDDGDDN). Positions 2483 to 2493 (MDLEDTDDGDD) are enriched in acidic residues. The active-site Glycyl thioester intermediate is Cys-2761.

Belongs to the UBR5 family. Homotetramer; composed of a dimer of dimers. Associates with CDK9 and TFIIS/TCEA1 and forms a transcription regulatory complex made of CDK9, RNAP II, UBR5 and TFIIS/TCEA1 that can stimulate target gene transcription (e.g. gamma fibrinogen/FGG) by recruiting their promoters. Associates with the E3 ligase complex containing DYRK2, EDD/UBR5, DDB1 and DCAF1 proteins (EDVP complex). Binds TOPBP1. Interacts with PIH1D1. Interacts with CIB1.

It is found in the nucleus. Its subcellular location is the cytoplasm. The enzyme catalyses S-ubiquitinyl-[E2 ubiquitin-conjugating enzyme]-L-cysteine + [acceptor protein]-L-lysine = [E2 ubiquitin-conjugating enzyme]-L-cysteine + N(6)-ubiquitinyl-[acceptor protein]-L-lysine.. It participates in protein modification; protein ubiquitination. In terms of biological role, E3 ubiquitin-protein ligase involved in different protein quality control pathways in the cytoplasm and nucleus. Mainly acts as a ubiquitin chain elongator that extends pre-ubiquitinated substrates. Component of the N-end rule pathway: ubiquitinates proteins bearing specific N-terminal residues that are destabilizing according to the N-end rule, leading to their degradation. Recognizes type-1 N-degrons, containing positively charged amino acids (Arg, Lys and His). Together with UBR4, part of a cytoplasm protein quality control pathway that prevents protein aggregation by catalyzing assembly of heterotypic 'Lys-11'-/'Lys-48'-linked branched ubiquitin chains on aggregated proteins, leading to substrate recognition by the segregase p97/VCP and degradation by the proteasome: UBR5 is probably branching multiple 'Lys-48'-linked chains of substrates initially modified with mixed conjugates by UBR4. Together with ITCH, catalyzes 'Lys-48'-/'Lys-63'-branched ubiquitination of TXNIP, leading to its degradation: UBR5 mediates branching of 'Lys-48'-linked chains of substrates initially modified with 'Lys-63'-linked conjugates by ITCH. Catalytic component of a nuclear protein quality control pathway that mediates ubiquitination and degradation of unpaired transcription factors (i.e. transcription factors that are not assembled into functional multiprotein complexes): specifically recognizes and binds degrons that are not accessible when transcription regulators are associated with their coactivators. Ubiquitinates various unpaired transcription regulator (MYC, SUPT4H1, SUPT5H, CDC20 and MCRS1), as well as ligand-bound nuclear receptors (ESR1, NR1H3, NR3C1, PGR, RARA, RXRA AND VDR) that are not associated with their nuclear receptor coactivators (NCOAs). Involved in maturation and/or transcriptional regulation of mRNA by mediating polyubiquitination and activation of CDK9. Also acts as a regulator of DNA damage response by acting as a suppressor of RNF168, an E3 ubiquitin-protein ligase that promotes accumulation of 'Lys-63'-linked histone H2A and H2AX at DNA damage sites, thereby acting as a guard against excessive spreading of ubiquitinated chromatin at damaged chromosomes. Regulates DNA topoisomerase II binding protein (TopBP1) in the DNA damage response. Ubiquitinates acetylated PCK1. Acts as a positive regulator of the canonical Wnt signaling pathway by mediating (1) ubiquitination and stabilization of CTNNB1, and (2) 'Lys-48'-linked ubiquitination and degradation of TLE3. Promotes disassembly of the mitotic checkpoint complex (MCC) from the APC/C complex by catalyzing ubiquitination of BUB1B, BUB3 and CDC20. Plays an essential role in extraembryonic development. Required for the maintenance of skeletal tissue homeostasis by acting as an inhibitor of hedgehog (HH) signaling. The chain is E3 ubiquitin-protein ligase UBR5 from Mus musculus (Mouse).